A 215-amino-acid chain; its full sequence is Thymidylate kinase (215 aa).

12–19 is an ATP binding site; the sequence is GLEGAGKT.

The protein belongs to the thymidylate kinase family.

The enzyme catalyses dTMP + ATP = dTDP + ADP. Its function is as follows. Phosphorylation of dTMP to form dTDP in both de novo and salvage pathways of dTTP synthesis. The polypeptide is Thymidylate kinase (Halorhodospira halophila (strain DSM 244 / SL1) (Ectothiorhodospira halophila (strain DSM 244 / SL1))).